The primary structure comprises 223 residues: Oxaloacetate tautomerase FAHD1, mitochondrial (223 aa).

The transit peptide at 1 to 30 (MATSMIQRMFKQGTKIVCVGRNYAAHAKEL) directs the protein to the mitochondrion. Mg(2+) contacts are provided by E67, E69, and D98.

The protein belongs to the FAH family. The cofactor is Mg(2+). Mn(2+) is required as a cofactor.

Its subcellular location is the mitochondrion. The catalysed reaction is oxaloacetate = enol-oxaloacetate. Functionally, tautomerase that converts enol-oxaloacetate, a strong inhibitor of succinate dehydrogenase, to the physiological keto form of oxaloacetate. This chain is Oxaloacetate tautomerase FAHD1, mitochondrial, found in Arabidopsis thaliana (Mouse-ear cress).